The chain runs to 77 residues: Large ribosomal subunit protein uL29 (77 aa).

It belongs to the universal ribosomal protein uL29 family.

The sequence is that of Large ribosomal subunit protein uL29 from Mycobacterium sp. (strain JLS).